Consider the following 351-residue polypeptide: Putative [LysW]-L-2-aminoadipate/[LysW]-L-glutamate phosphate reductase (351 aa).

Residues 10-13 (SGFT) and 34-36 (SRK) contribute to the NADP(+) site. Residue Cys-151 is part of the active site. Asn-318 provides a ligand contact to NADP(+).

This sequence belongs to the NAGSA dehydrogenase family. Type 1 subfamily. LysY sub-subfamily.

The protein resides in the cytoplasm. The enzyme catalyses [amino-group carrier protein]-C-terminal-N-(1-carboxy-5-oxopentan-1-yl)-L-glutamine + phosphate + NADP(+) = [amino-group carrier protein]-C-terminal-N-(1-carboxy-5-phosphooxy-5-oxopentan-1-yl)-L-glutamine + NADPH + H(+). The catalysed reaction is [amino-group carrier protein]-C-terminal-gamma-(L-glutamyl-5-semialdehyde)-L-glutamate + phosphate + NADP(+) = [amino-group carrier protein]-C-terminal-gamma-(5-phospho-L-glutamyl)-L-glutamate + NADPH + H(+). It participates in amino-acid biosynthesis; L-lysine biosynthesis via AAA pathway; L-lysine from L-alpha-aminoadipate (Thermus route): step 3/5. Its pathway is amino-acid biosynthesis; L-arginine biosynthesis. In terms of biological role, involved in both the arginine and lysine biosynthetic pathways. The chain is Putative [LysW]-L-2-aminoadipate/[LysW]-L-glutamate phosphate reductase from Pyrobaculum calidifontis (strain DSM 21063 / JCM 11548 / VA1).